We begin with the raw amino-acid sequence, 427 residues long: MKLETKAQGLRGSLRIPGDKSISHRSIMFGSLAKGVTTVRDILRGEDVLSTMQVFRDLGVTIEDDGDVVRIHGVGFDGLKAPQNKLDMGNSGTSIRLISGVLAGQDFDVEMFGDDSLSKRPMDRVTIPLRQMGVEVSGQTDRDLPPLKMHGSKSLKPIHYELPVASAQVKSALIFAALQADGESVIIEKEKTRNHTEDMIQQFGGQLQVEGKEIRISGGQTFTAQEVVVPGDISSAAFWLVAGLVVPNSKIVLKNVGINETRTGVIDVIKDMGGKIKLSDIDQVAKSATITVETSELKGTEIGGDIIPRLIDELPIITLLATQAQGKTVIRDAEELKVKETDRIQVVADALNAMGADIVPTEDGMIITGKTPLHGAEVNTFGDHRIGMMTAIAALLVQDGEVDLQRAEAINTSYPSFFSDLEGLLHG.

3 residues coordinate 3-phosphoshikimate: K20, S21, and R25. K20 is a binding site for phosphoenolpyruvate. Phosphoenolpyruvate-binding residues include G92 and R120. The 3-phosphoshikimate site is built by S166, Q168, D312, and K339. Q168 provides a ligand contact to phosphoenolpyruvate. The Proton acceptor role is filled by D312. Residues R343 and R385 each coordinate phosphoenolpyruvate.

Belongs to the EPSP synthase family. As to quaternary structure, monomer.

The protein resides in the cytoplasm. It carries out the reaction 3-phosphoshikimate + phosphoenolpyruvate = 5-O-(1-carboxyvinyl)-3-phosphoshikimate + phosphate. It functions in the pathway metabolic intermediate biosynthesis; chorismate biosynthesis; chorismate from D-erythrose 4-phosphate and phosphoenolpyruvate: step 6/7. Catalyzes the transfer of the enolpyruvyl moiety of phosphoenolpyruvate (PEP) to the 5-hydroxyl of shikimate-3-phosphate (S3P) to produce enolpyruvyl shikimate-3-phosphate and inorganic phosphate. In Streptococcus thermophilus (strain ATCC BAA-250 / LMG 18311), this protein is 3-phosphoshikimate 1-carboxyvinyltransferase.